Here is a 266-residue protein sequence, read N- to C-terminus: MPDVTLTTLQGLKQKGEKIVMLTCYDATFAKTACDAGVEMLLIGDSLGMVLQGHDSTLPVTVADMAYHTASVKRGNRGAMIVADLPFMANATTEQTLNNSALLMQAGAHMIKLEGTAWLAESIRLLADRGIPVCAHMGLTPQAVNLFGGYKVQGREEAQAQQMLEDAKSLEAAGAAMLLLECVPSELAARITRAVQIPVIGIGAGSDTDGQVLVLHDMLGLSLSGRVPKFVKNFMREHGDIPAAIAGYVKAVKAVEFPAAEHGFSA.

Mg(2+) is bound by residues Asp45 and Asp84. Residues 45 to 46 (DS), Asp84, and Lys112 contribute to the 3-methyl-2-oxobutanoate site. Glu114 is a binding site for Mg(2+). The active-site Proton acceptor is Glu181.

It belongs to the PanB family. As to quaternary structure, homodecamer; pentamer of dimers. Mg(2+) is required as a cofactor.

The protein resides in the cytoplasm. It carries out the reaction 3-methyl-2-oxobutanoate + (6R)-5,10-methylene-5,6,7,8-tetrahydrofolate + H2O = 2-dehydropantoate + (6S)-5,6,7,8-tetrahydrofolate. It functions in the pathway cofactor biosynthesis; (R)-pantothenate biosynthesis; (R)-pantoate from 3-methyl-2-oxobutanoate: step 1/2. Catalyzes the reversible reaction in which hydroxymethyl group from 5,10-methylenetetrahydrofolate is transferred onto alpha-ketoisovalerate to form ketopantoate. The sequence is that of 3-methyl-2-oxobutanoate hydroxymethyltransferase from Stutzerimonas stutzeri (strain A1501) (Pseudomonas stutzeri).